A 524-amino-acid chain; its full sequence is Keratin, type II cytoskeletal 72 (524 aa).

Positions 1-136 (MSRQLNLYPG…DPEIQKVRAQ (136 aa)) are head. The segment at 137–172 (EREQIKALNNKFASFIDKVRFLEQQNQVLGTKWELL) is coil 1A. Positions 137–450 (EREQIKALNN…KLLEGEECRM (314 aa)) constitute an IF rod domain. The segment at 173-191 (QQLDLNNCKNNLEPILEGY) is linker 1. A coil 1B region spans residues 192 to 283 (TSNLRKQLEM…CLYEGEIAQL (92 aa)). The tract at residues 284-307 (QSHISDTSVILSMDNNRDLDLDSI) is linker 12. The tract at residues 308-446 (IAQVRAQYEE…ATYRKLLEGE (139 aa)) is coil 2. A tail region spans residues 447–524 (ECRMSGEYPN…SSCATKKASR (78 aa)). A disordered region spans residues 495-524 (KTKGSCGGSELKDAPAKTSGSSCATKKASR).

The protein belongs to the intermediate filament family. As to quaternary structure, heterotetramer of two type I and two type II keratins.

Has a role in hair formation. Specific component of keratin intermediate filaments in the inner root sheath (IRS) of the hair follicle. This is Keratin, type II cytoskeletal 72 (KRT72) from Bos taurus (Bovine).